Consider the following 151-residue polypeptide: Ubiquitin-like protein 4A-B (151 aa).

Residues methionine 1–glutamate 76 enclose the Ubiquitin-like domain.

In terms of assembly, component of the BAT3 complex.

Its subcellular location is the cytoplasm. It localises to the cytosol. Component of the BAT3 complex, a multiprotein complex involved in the post-translational delivery of tail-anchored (TA) membrane proteins to the endoplasmic reticulum membrane. TA membrane proteins, also named type II transmembrane proteins, contain a single C-terminal transmembrane region. This Oncorhynchus mykiss (Rainbow trout) protein is Ubiquitin-like protein 4A-B (ubl4ab).